We begin with the raw amino-acid sequence, 159 residues long: Large ribosomal subunit protein uL11 (159 aa).

The protein belongs to the universal ribosomal protein uL11 family. Part of the ribosomal stalk of the 50S ribosomal subunit. Interacts with L10 and the large rRNA to form the base of the stalk. L10 forms an elongated spine to which L12 dimers bind in a sequential fashion forming a multimeric L10(L12)X complex.

Its function is as follows. Forms part of the ribosomal stalk which helps the ribosome interact with GTP-bound translation factors. This chain is Large ribosomal subunit protein uL11, found in Nitrosopumilus maritimus (strain SCM1).